Consider the following 370-residue polypeptide: Dual-specificity RNA methyltransferase RlmN (370 aa).

The Proton acceptor role is filled by Glu93. In terms of domain architecture, Radical SAM core spans 99–337 (EEGRGTLCVS…VTTVRKTRGD (239 aa)). A disulfide bond links Cys106 and Cys343. Residues Cys113, Cys117, and Cys120 each contribute to the [4Fe-4S] cluster site. S-adenosyl-L-methionine is bound by residues 167-168 (GE), Ser199, 221-223 (SLH), and Asn300. Cys343 functions as the S-methylcysteine intermediate in the catalytic mechanism.

It belongs to the radical SAM superfamily. RlmN family. The cofactor is [4Fe-4S] cluster.

The protein localises to the cytoplasm. The enzyme catalyses adenosine(2503) in 23S rRNA + 2 reduced [2Fe-2S]-[ferredoxin] + 2 S-adenosyl-L-methionine = 2-methyladenosine(2503) in 23S rRNA + 5'-deoxyadenosine + L-methionine + 2 oxidized [2Fe-2S]-[ferredoxin] + S-adenosyl-L-homocysteine. It catalyses the reaction adenosine(37) in tRNA + 2 reduced [2Fe-2S]-[ferredoxin] + 2 S-adenosyl-L-methionine = 2-methyladenosine(37) in tRNA + 5'-deoxyadenosine + L-methionine + 2 oxidized [2Fe-2S]-[ferredoxin] + S-adenosyl-L-homocysteine. Functionally, specifically methylates position 2 of adenine 2503 in 23S rRNA and position 2 of adenine 37 in tRNAs. m2A2503 modification seems to play a crucial role in the proofreading step occurring at the peptidyl transferase center and thus would serve to optimize ribosomal fidelity. The protein is Dual-specificity RNA methyltransferase RlmN of Francisella tularensis subsp. holarctica (strain LVS).